Reading from the N-terminus, the 471-residue chain is Probable lysophospholipase BODYGUARD 2 (471 aa).

The first 45 residues, 1–45 (MGIARWLNRTVGFFVFALLDIADFLLCYTYKTLDYFLESERKPCY), serve as a signal peptide directing secretion. Cys-46 is lipidated: N-palmitoyl cysteine. The AB hydrolase-1 domain occupies 193–296 (VVFIHGFVSS…AIKSLTLLAP (104 aa)). His-197 is an active-site residue. Ser-271 (nucleophile) is an active-site residue. Active-site charge relay system residues include Asp-418 and His-446.

It is found in the cell membrane. Its subcellular location is the secreted. The protein localises to the cell wall. In terms of biological role, involved in cuticle development and morphogenesis. This is Probable lysophospholipase BODYGUARD 2 from Arabidopsis thaliana (Mouse-ear cress).